We begin with the raw amino-acid sequence, 145 residues long: UPF0763 protein CFF8240_1572 (145 aa).

Belongs to the UPF0763 family.

The chain is UPF0763 protein CFF8240_1572 from Campylobacter fetus subsp. fetus (strain 82-40).